The primary structure comprises 313 residues: Aspartate carbamoyltransferase catalytic subunit (313 aa).

Arg-55 and Thr-56 together coordinate carbamoyl phosphate. Lys-83 lines the L-aspartate pocket. Positions 105, 138, and 141 each coordinate carbamoyl phosphate. L-aspartate contacts are provided by Arg-171 and Arg-225. Carbamoyl phosphate contacts are provided by Gly-266 and Pro-267.

It belongs to the aspartate/ornithine carbamoyltransferase superfamily. ATCase family. In terms of assembly, heterododecamer (2C3:3R2) of six catalytic PyrB chains organized as two trimers (C3), and six regulatory PyrI chains organized as three dimers (R2).

It carries out the reaction carbamoyl phosphate + L-aspartate = N-carbamoyl-L-aspartate + phosphate + H(+). It functions in the pathway pyrimidine metabolism; UMP biosynthesis via de novo pathway; (S)-dihydroorotate from bicarbonate: step 2/3. In terms of biological role, catalyzes the condensation of carbamoyl phosphate and aspartate to form carbamoyl aspartate and inorganic phosphate, the committed step in the de novo pyrimidine nucleotide biosynthesis pathway. This is Aspartate carbamoyltransferase catalytic subunit from Corynebacterium diphtheriae (strain ATCC 700971 / NCTC 13129 / Biotype gravis).